A 593-amino-acid chain; its full sequence is Methionine--tRNA ligase, mitochondrial (593 aa).

The N-terminal 29 residues, 1-29 (MLRVSAFRLLGRRGASRVSLLEDFSFRYY), are a transit peptide targeting the mitochondrion. The 'HIGH' region motif lies at 52 to 62 (FYVNAAPHIGH). The short motif at 347-351 (KMSKS) is the 'KMSKS' region element. Lys350 lines the ATP pocket.

It belongs to the class-I aminoacyl-tRNA synthetase family.

The protein localises to the mitochondrion matrix. It catalyses the reaction tRNA(Met) + L-methionine + ATP = L-methionyl-tRNA(Met) + AMP + diphosphate. This Bos taurus (Bovine) protein is Methionine--tRNA ligase, mitochondrial (MARS2).